Here is a 1452-residue protein sequence, read N- to C-terminus: CLIP-associating protein 1 (1452 aa).

HEAT repeat units follow at residues 68–87, 88–124, and 163–200; these read LLGM…RFRS, QIGT…QASN, and LTLS…HVGE. The segment at 239 to 299 is disordered; sequence KNFDDEDSVD…GTAKEGAGGV (61 aa). Over residues 253–267 the composition is skewed to low complexity; the sequence is SSASSSASSKAPQAA. HEAT repeat units lie at residues 407–442 and 443–479; these read HGAE…IRQT and HVPR…EWQT. Disordered regions lie at residues 545–735 and 771–792; these read SDSI…GISQ and YGMY…ERSY. Over residues 550 to 569 the composition is skewed to low complexity; that stretch reads SLPQSDRSSSSSQESLNRPL. Positions 573–597 are enriched in polar residues; that stretch reads RSPTGSTVSRASTATSKSTPGSLQR. 3 stretches are compositionally biased toward low complexity: residues 606–621, 645–659, and 668–682; these read AATC…ASAA, QSSG…TPAD, and VVSQ…SSPG. The span at 715–724 shows a compositional bias: polar residues; sequence QGCSRETSPS. Residues 781–792 are compositionally biased toward low complexity; that stretch reads SDASSACSERSY. An HEAT 6 repeat occupies 926-963; sequence QQFNILMRFIVDQTQTPNLKVKVAILKYIESLARQMDP. Positions 1033–1076 are disordered; sequence LKNSSNSSMGSPSNTIGRTPSRHSSSRASPLTSPTNCSHGGLSP. Positions 1034 to 1046 are enriched in low complexity; the sequence is KNSSNSSMGSPSN. A compositionally biased stretch (polar residues) spans 1058–1070; that stretch reads SRASPLTSPTNCS. 2 HEAT repeats span residues 1256–1293 and 1374–1411; these read EHFK…NQPA and QILP…VIGE.

This sequence belongs to the CLASP family. As to quaternary structure, interacts (via C-terminus) with clip1/clip-170, and cenpe.

It localises to the cytoplasm. It is found in the cytoskeleton. The protein resides in the microtubule organizing center. Its subcellular location is the centrosome. The protein localises to the chromosome. It localises to the centromere. It is found in the kinetochore. The protein resides in the spindle. Its subcellular location is the golgi apparatus. The protein localises to the trans-Golgi network. In terms of biological role, microtubule plus-end tracking protein that promotes the stabilization of dynamic microtubules during anaphase. Plays a crucial role in chromatin-induced microtubule formation. May also act at microtubule minus ends. May be involved in the nucleation of noncentrosomal microtubules originating from the trans-Golgi network (TGN). The polypeptide is CLIP-associating protein 1 (Xenopus tropicalis (Western clawed frog)).